Reading from the N-terminus, the 445-residue chain is Methylenetetrahydrofolate--tRNA-(uracil-5-)-methyltransferase TrmFO (445 aa).

9–14 lines the FAD pocket; the sequence is GGGLAG.

Belongs to the MnmG family. TrmFO subfamily. It depends on FAD as a cofactor.

The protein resides in the cytoplasm. It catalyses the reaction uridine(54) in tRNA + (6R)-5,10-methylene-5,6,7,8-tetrahydrofolate + NADH + H(+) = 5-methyluridine(54) in tRNA + (6S)-5,6,7,8-tetrahydrofolate + NAD(+). The catalysed reaction is uridine(54) in tRNA + (6R)-5,10-methylene-5,6,7,8-tetrahydrofolate + NADPH + H(+) = 5-methyluridine(54) in tRNA + (6S)-5,6,7,8-tetrahydrofolate + NADP(+). Functionally, catalyzes the folate-dependent formation of 5-methyl-uridine at position 54 (M-5-U54) in all tRNAs. The polypeptide is Methylenetetrahydrofolate--tRNA-(uracil-5-)-methyltransferase TrmFO (Rhizorhabdus wittichii (strain DSM 6014 / CCUG 31198 / JCM 15750 / NBRC 105917 / EY 4224 / RW1) (Sphingomonas wittichii)).